Consider the following 518-residue polypeptide: Receptor-interacting serine/threonine-protein kinase 3 (518 aa).

Phosphoserine is present on Ser-2. The Protein kinase domain maps to 21–287 (LENQELVGKG…ECLPKTDEVF (267 aa)). 27-35 (VGKGGFGTV) lines the ATP pocket. Lys-42 participates in a covalent cross-link: Glycyl lysine isopeptide (Lys-Gly) (interchain with G-Cter in ubiquitin). Lys-50 serves as a coordination point for ATP. Asp-142 functions as the Proton acceptor in the catalytic mechanism. Ser-164 is subject to Phosphoserine. At Thr-182 the chain carries Phosphothreonine. Phosphoserine; by autocatalysis occurs at positions 199 and 227. Residue Thr-252 is modified to Phosphothreonine. Ser-299 carries the post-translational modification Phosphoserine. Thr-333 is modified (phosphothreonine). Glycyl lysine isopeptide (Lys-Gly) (interchain with G-Cter in ubiquitin) cross-links involve residues Lys-351 and Lys-363. Residues 355–443 (EEPPSSVPKK…WSCRTPEPNP (89 aa)) form a disordered region. Residues 384–408 (TAGTSSDSMAQPPQTPETSTFRNQM) are compositionally biased toward polar residues. At Ser-389 the chain carries Phosphoserine. A Phosphothreonine modification is found at Thr-401. The short motif at 450-466 (VNIYNCSGVQVGDNNYL) is the RIP homotypic interaction motif (RHIM) element. Positions 476–518 (TWGLAPSGKGRGLQHPPPVGSQEGPKDPEAWSRPQGWYNHSGK) are disordered. A Glycyl lysine isopeptide (Lys-Gly) (interchain with G-Cter in ubiquitin) cross-link involves residue Lys-518.

The protein belongs to the protein kinase superfamily. TKL Ser/Thr protein kinase family. In terms of assembly, interacts (via RIP homotypic interaction motif) with RIPK1 (via RIP homotypic interaction motif); this interaction induces RIPK1 phosphorylation and formation of a RIPK1-RIPK3 necrosis-inducing complex. Interacts with MLKL; the interaction is direct and triggers necroptosis. Interacts with ZBP1 (via RIP homotypic interaction motif); interaction with ZBP1 activates RIPK3, triggering necroptosis. Upon TNF-induced necrosis, the RIPK1-RIPK3 dimer further interacts with PGAM5 and MLKL; the formation of this complex leads to PGAM5 phosphorylation and increase in PGAM5 phosphatase activity. Binds TRAF2 and is recruited to the TNFR-1 signaling complex. Interacts with PYGL, GLUL and GLUD1; these interactions result in activation of these metabolic enzymes. Interacts with BIRC2/c-IAP1, BIRC3/c-IAP2 and XIAP/BIRC4. Interacts with ARHGEF2. Interacts with PELI1 (via atypical FHA domain); the phosphorylated form at Thr-182 binds preferentially to PELI1. Interacts with BUB1B, TRAF2 and STUB1. Interacts with CASP6. Component of the AIM2 PANoptosome complex, a multiprotein complex that drives inflammatory cell death (PANoptosis). As to quaternary structure, (Microbial infection) Interacts (via RIP homotypic interaction motif/RHIM) with herpes simplex virus 1/HHV-1 protein RIR1/ICP6 (via RHIM); this interaction may induce heteromeric amyloid assemblies and prevent necroptosis activation. (Microbial infection) Interacts (via RIP homotypic interaction motif/RHIM) with herpes simplex virus 2/HHV-2 protein RIR1/ICP10 (via RHIM); this interaction prevents necroptosis activation. (Microbial infection) Proteolytically cleaved by S.flexneri OspD3 within the RIP homotypic interaction motif (RHIM), leading to its degradation and inhibition of necroptosis. In terms of processing, RIPK1 and RIPK3 undergo reciprocal auto- and trans-phosphorylation. Autophosphorylated following interaction with ZBP1. Phosphorylation of Ser-199 plays a role in the necroptotic function of RIPK3. Autophosphorylates at Ser-227 following activation by ZBP1: phosphorylation at these sites is a hallmark of necroptosis and is required for binding MLKL. Phosphorylation at Thr-182 is important for its kinase activity, interaction with PELI1 and PELI1-mediated 'Lys-48'-linked polyubiquitination and for its ability to mediate TNF-induced necroptosis. Post-translationally, polyubiquitinated with 'Lys-48' and 'Lys-63'-linked chains by BIRC2/c-IAP1 and BIRC3/c-IAP2, leading to activation of NF-kappa-B. Polyubiquitinated with 'Lys-48'-linked chains by PELI1 leading to its subsequent proteasome-dependent degradation. Ubiquitinated by STUB1 leading to its subsequent proteasome-dependent degradation. Deubiquitinated by USP22. Highly expressed in the pancreas. Detected at lower levels in heart, placenta, lung and kidney. In terms of tissue distribution, expression is significantly increased in colon and lung cancers.

It localises to the cytoplasm. The protein resides in the cytosol. The protein localises to the nucleus. The catalysed reaction is L-seryl-[protein] + ATP = O-phospho-L-seryl-[protein] + ADP + H(+). The enzyme catalyses L-threonyl-[protein] + ATP = O-phospho-L-threonyl-[protein] + ADP + H(+). Activity is stimulated by ZBP1, which senses double-stranded Z-RNA structures. RIPK3-dependent necroptosis is inhibited by RIPK1: RIPK1 prevents the ZBP1-induced activation of RIPK3 via FADD-mediated recruitment of CASP8, which cleaves RIPK1 and limits TNF-induced necroptosis. In terms of biological role, serine/threonine-protein kinase that activates necroptosis and apoptosis, two parallel forms of cell death. Necroptosis, a programmed cell death process in response to death-inducing TNF-alpha family members, is triggered by RIPK3 following activation by ZBP1. Activated RIPK3 forms a necrosis-inducing complex and mediates phosphorylation of MLKL, promoting MLKL localization to the plasma membrane and execution of programmed necrosis characterized by calcium influx and plasma membrane damage. In addition to TNF-induced necroptosis, necroptosis can also take place in the nucleus in response to orthomyxoviruses infection: following ZBP1 activation, which senses double-stranded Z-RNA structures, nuclear RIPK3 catalyzes phosphorylation and activation of MLKL, promoting disruption of the nuclear envelope and leakage of cellular DNA into the cytosol. Also regulates apoptosis: apoptosis depends on RIPK1, FADD and CASP8, and is independent of MLKL and RIPK3 kinase activity. Phosphorylates RIPK1: RIPK1 and RIPK3 undergo reciprocal auto- and trans-phosphorylation. In some cell types, also able to restrict viral replication by promoting cell death-independent responses. In response to Zika virus infection in neurons, promotes a cell death-independent pathway that restricts viral replication: together with ZBP1, promotes a death-independent transcriptional program that modifies the cellular metabolism via up-regulation expression of the enzyme ACOD1/IRG1 and production of the metabolite itaconate. Itaconate inhibits the activity of succinate dehydrogenase, generating a metabolic state in neurons that suppresses replication of viral genomes. RIPK3 binds to and enhances the activity of three metabolic enzymes: GLUL, GLUD1, and PYGL. These metabolic enzymes may eventually stimulate the tricarboxylic acid cycle and oxidative phosphorylation, which could result in enhanced ROS production. (Microbial infection) In case of herpes simplex virus 1/HHV-1 infection, forms heteromeric amyloid structures with HHV-1 protein RIR1/ICP6 which may inhibit RIPK3-mediated necroptosis, thereby preventing host cell death pathway and allowing viral evasion. This is Receptor-interacting serine/threonine-protein kinase 3 from Homo sapiens (Human).